The primary structure comprises 507 residues: Myocyte-specific enhancer factor 2A (507 aa).

The MADS-box domain occupies 3 to 57 (RKKIQITRIMDERNRQVTFTKRKFGLMKKAYELSVLCDCEIALIIFNSSNKLFQY). Lys30 carries the post-translational modification Phosphoserine. The mef2-type DNA-binding region spans 58-86 (ASTDMDKVLLKYTEYNEPHESRTNSDIVE). Residue Ser59 is modified to Phosphoserine; by CK2. Position 98 is a phosphoserine (Ser98). Low complexity predominate over residues 173–183 (TLTDSSMLSPP). Residues 173-229 (TLTDSSMLSPPQTTLHRNVSPGAPQRPPSTGNAGGMLSTTDLTVPNGAGSSPVGNGF) are disordered. Residues 209–229 (LSTTDLTVPNGAGSSPVGNGF) are compositionally biased toward polar residues. A Phosphoserine modification is found at Ser235. The segment at 243–270 (GANSLGKVMPTKSPPPPGGGNLGMNSRK) is disordered. Position 249 is an N6-acetyllysine (Lys249). Ser255 carries the post-translational modification Phosphoserine; by MAPK14. The tract at residues 266 to 283 (MNSRKPDLRVVIPPSSKG) is required for interaction with MAPKs. Residues 289–296 (SEEEELEL) are beta domain. Phosphothreonine; by MAPK7 and MAPK14 occurs at positions 312 and 319. At Thr312 the chain carries Phosphothreonine; by NLK. Residue Ser355 is modified to Phosphoserine; by MAPK7. The interval 397-507 (NQNISIKSEP…KRMRMDAWVT (111 aa)) is disordered. Residue Lys403 is modified to N6-acetyllysine; alternate. Lys403 participates in a covalent cross-link: Glycyl lysine isopeptide (Lys-Gly) (interchain with G-Cter in SUMO); alternate. Position 408 is a phosphoserine; by CDK5 (Ser408). Thr415 is subject to Phosphothreonine. The span at 420–429 (QQQQQQQQQQ) shows a compositional bias: low complexity. Over residues 430–445 (QPPPPPQPQPQPPQPQ) the composition is skewed to pro residues. At Ser453 the chain carries Phosphoserine; by MAPK. Positions 453 to 466 (SPVDSLSSSSSSYD) are enriched in low complexity. 2 stretches are compositionally biased toward basic and acidic residues: residues 467–477 (GSDREDPRGDF) and 488–507 (NTED…AWVT).

This sequence belongs to the MEF2 family. In terms of assembly, binds DNA as a homo- or heterodimer. Dimerizes with MEF2D. Interacts with HDAC7. Interacts with PIAS1; the interaction enhances sumoylation. Interacts with HDAC4, HDAC9 and SLC2A4RG. Interacts (via the N-terminal) with MAPK7; the interaction results in the phosphorylation and transcriptional activity of MEF2A. Post-translationally, constitutive phosphorylation on Ser-408 promotes Lys-403 sumoylation thus preventing acetylation at this site. Dephosphorylation on Ser-408 by PPP3CA upon neuron depolarization promotes a switch from sumoylation to acetylation on residue Lys-403 leading to inhibition of dendrite claw differentiation. Phosphorylation on Thr-312 and Thr-319 are the main sites involved in p38 MAPK signaling and activate transcription. Phosphorylated on these sites by MAPK14/p38alpha and MAPK11/p38beta, but not by MAPK13/p38delta nor by MAPK12/p38gamma. Phosphorylation on Ser-408 by CDK5 induced by neurotoxicity inhibits MEF2A transcriptional activation leading to apoptosis of cortical neurons. Phosphorylation on Thr-312, Thr-319 and Ser-355 can be induced by EGF. In terms of processing, sumoylation on Lys-403 is enhanced by PIAS1 and represses transcriptional activity. Phosphorylation on Ser-408 is required for sumoylation. Has no effect on nuclear location nor on DNA binding. Sumoylated with SUMO1 and, to a lesser extent with SUMO2 and SUMO3. PIASx facilitates sumoylation in postsynaptic dendrites in the cerebellar cortex and promotes their morphogenesis. Acetylation on Lys-403 activates transcriptional activity. Acetylated by p300 on several sites in diffentiating myocytes. Acetylation on Lys-4 increases DNA binding and transactivation. Hyperacetylation by p300 leads to enhanced cardiac myocyte growth and heart failure. Post-translationally, proteolytically cleaved in cerebellar granule neurons on several sites by caspase 3 and caspase 7 following neurotoxicity. Preferentially cleaves the CDK5-mediated hyperphosphorylated form which leads to neuron apoptosis and transcriptional inactivation. Isoform MEF2 and isoform MEFA are expressed only in skeletal and cardiac muscle and in the brain. Isoform RSRFC4 and isoform RSRFC9 are expressed in all tissues examined.

It localises to the nucleus. Its function is as follows. Transcriptional activator which binds specifically to the MEF2 element, 5'-YTA[AT](4)TAR-3', found in numerous muscle-specific genes. Also involved in the activation of numerous growth factor- and stress-induced genes. Mediates cellular functions not only in skeletal and cardiac muscle development, but also in neuronal differentiation and survival. Plays diverse roles in the control of cell growth, survival and apoptosis via p38 MAPK signaling in muscle-specific and/or growth factor-related transcription. In cerebellar granule neurons, phosphorylated and sumoylated MEF2A represses transcription of NUR77 promoting synaptic differentiation. Associates with chromatin to the ZNF16 promoter. The chain is Myocyte-specific enhancer factor 2A (MEF2A) from Homo sapiens (Human).